A 66-amino-acid polypeptide reads, in one-letter code: Photosystem II reaction center protein J (66 aa).

The interval 1 to 25 (MSGKKSPYPDGRIPDRNPDGTPAVP) is disordered. A helical transmembrane segment spans residues 37–57 (LWLVATAGGMAVLFVVGLFFY).

This sequence belongs to the PsbJ family. As to quaternary structure, PSII is composed of 1 copy each of membrane proteins PsbA, PsbB, PsbC, PsbD, PsbE, PsbF, PsbH, PsbI, PsbJ, PsbK, PsbL, PsbM, PsbT, PsbX, PsbY, PsbZ, Psb30/Ycf12, peripheral proteins PsbO, CyanoQ (PsbQ), PsbU, PsbV and a large number of cofactors. It forms dimeric complexes.

The protein resides in the cellular thylakoid membrane. In terms of biological role, one of the components of the core complex of photosystem II (PSII). PSII is a light-driven water:plastoquinone oxidoreductase that uses light energy to abstract electrons from H(2)O, generating O(2) and a proton gradient subsequently used for ATP formation. It consists of a core antenna complex that captures photons, and an electron transfer chain that converts photonic excitation into a charge separation. The sequence is that of Photosystem II reaction center protein J from Synechococcus sp. (strain CC9605).